Here is a 750-residue protein sequence, read N- to C-terminus: Neprilysin (750 aa).

Residues 1 to 14 (MGKSESQMDITDIN) show a composition bias toward polar residues. Positions 1-20 (MGKSESQMDITDINTPKPKK) are disordered. Glycine 2 is lipidated: N-myristoyl glycine. Over 2 to 28 (GKSESQMDITDINTPKPKKKQRWTPLE) the chain is Cytoplasmic. Phosphoserine occurs at positions 4 and 6. Residues 16-23 (PKPKKKQR) carry the Stop-transfer sequence motif. A helical; Signal-anchor for type II membrane protein transmembrane segment spans residues 29–51 (ISLSVLVLLLTIIAVTMIALYAT). Residues 52–750 (YDDGICKSSD…MNPEKKCRVW (699 aa)) are Extracellular-facing. Positions 56–750 (ICKSSDCIKS…MNPEKKCRVW (695 aa)) constitute a Peptidase M13 domain. 6 disulfides stabilise this stretch: cysteine 57–cysteine 62, cysteine 80–cysteine 735, cysteine 88–cysteine 695, cysteine 143–cysteine 411, cysteine 234–cysteine 242, and cysteine 621–cysteine 747. Residue arginine 103 coordinates a peptide. Asparagine 145 is a glycosylation site (N-linked (GlcNAc...) asparagine). Residues asparagine 285 and asparagine 325 are each glycosylated (N-linked (GlcNAc...) asparagine). Histidine 584 lines the Zn(2+) pocket. Residue glutamate 585 is part of the active site. Histidine 588 is a Zn(2+) binding site. A glycan (N-linked (GlcNAc...) asparagine) is linked at asparagine 628. A Zn(2+)-binding site is contributed by glutamate 647. Aspartate 651 functions as the Proton donor in the catalytic mechanism.

This sequence belongs to the peptidase M13 family. Zn(2+) is required as a cofactor. Post-translationally, myristoylation is a determinant of membrane targeting. In terms of processing, glycosylation at Asn-628 is necessary both for surface expression and neutral endopeptidase activity.

The protein resides in the cell membrane. The enzyme catalyses Preferential cleavage of polypeptides between hydrophobic residues, particularly with Phe or Tyr at P1'.. The catalysed reaction is substance P + H2O = substance P(1-9) + L-Leu-L-Met-NH2. It carries out the reaction substance P + H2O = substance P(1-7) + L-Phe-Gly-L-Leu-L-Met-NH2. It catalyses the reaction neurotensin + H2O = neurotensin(1-11) + L-isoleucyl-L-leucine. The enzyme catalyses neurotensin + H2O = neurotensin(1-10) + L-tyrosyl-L-isoleucyl-L-leucine. Inhibited in a dose dependent manner by opiorphin. Activated by K49-P1-20, a twenty-residue synthetic peptide shortened from the snake B.asper myotoxin II. In terms of biological role, thermolysin-like specificity, but is almost confined on acting on polypeptides of up to 30 amino acids. Biologically important in the destruction of opioid peptides such as Met- and Leu-enkephalins by cleavage of a Gly-Phe bond. Catalyzes cleavage of bradykinin, substance P and neurotensin peptides. Able to cleave angiotensin-1, angiotensin-2 and angiotensin 1-9. Involved in the degradation of atrial natriuretic factor (ANF) and brain natriuretic factor (BNP(1-32)). Displays UV-inducible elastase activity toward skin preelastic and elastic fibers. The sequence is that of Neprilysin from Homo sapiens (Human).